The chain runs to 214 residues: Pyrrolidone-carboxylate peptidase (214 aa).

Catalysis depends on residues Glu-80, Cys-143, and His-166.

It belongs to the peptidase C15 family. In terms of assembly, homotetramer.

The protein localises to the cytoplasm. It catalyses the reaction Release of an N-terminal pyroglutamyl group from a polypeptide, the second amino acid generally not being Pro.. Functionally, removes 5-oxoproline from various penultimate amino acid residues except L-proline. The chain is Pyrrolidone-carboxylate peptidase from Klebsiella pneumoniae (strain 342).